The chain runs to 375 residues: Succinyl-diaminopimelate desuccinylase (375 aa).

Residue H66 participates in Zn(2+) binding. D68 is a catalytic residue. A Zn(2+)-binding site is contributed by D99. The Proton acceptor role is filled by E133. Residues E134, E162, and H348 each contribute to the Zn(2+) site.

The protein belongs to the peptidase M20A family. DapE subfamily. Homodimer. Zn(2+) is required as a cofactor. The cofactor is Co(2+).

It catalyses the reaction N-succinyl-(2S,6S)-2,6-diaminopimelate + H2O = (2S,6S)-2,6-diaminopimelate + succinate. It functions in the pathway amino-acid biosynthesis; L-lysine biosynthesis via DAP pathway; LL-2,6-diaminopimelate from (S)-tetrahydrodipicolinate (succinylase route): step 3/3. Its function is as follows. Catalyzes the hydrolysis of N-succinyl-L,L-diaminopimelic acid (SDAP), forming succinate and LL-2,6-diaminopimelate (DAP), an intermediate involved in the bacterial biosynthesis of lysine and meso-diaminopimelic acid, an essential component of bacterial cell walls. This chain is Succinyl-diaminopimelate desuccinylase, found in Citrobacter koseri (strain ATCC BAA-895 / CDC 4225-83 / SGSC4696).